The following is a 269-amino-acid chain: Shikimate dehydrogenase (NADP(+)) (269 aa).

Residues 13–15 (SLS) and T60 contribute to the shikimate site. Catalysis depends on K64, which acts as the Proton acceptor. E76 contributes to the NADP(+) binding site. Positions 85 and 100 each coordinate shikimate. NADP(+) is bound by residues 124–128 (GAGGA), 148–153 (NRTMSR), and I209. Y211 lines the shikimate pocket. Position 232 (G232) interacts with NADP(+). Q239 serves as a coordination point for shikimate.

The protein belongs to the shikimate dehydrogenase family. Monomer or homodimer.

The enzyme catalyses shikimate + NADP(+) = 3-dehydroshikimate + NADPH + H(+). It participates in metabolic intermediate biosynthesis; chorismate biosynthesis; chorismate from D-erythrose 4-phosphate and phosphoenolpyruvate: step 4/7. In terms of biological role, involved in the biosynthesis of the chorismate, which leads to the biosynthesis of aromatic amino acids. Catalyzes the reversible NADPH linked reduction of 3-dehydroshikimate (DHSA) to yield shikimate (SA). It can also use NAD to oxidize shikimate. The polypeptide is Shikimate dehydrogenase (NADP(+)) (Staphylococcus epidermidis (strain ATCC 35984 / DSM 28319 / BCRC 17069 / CCUG 31568 / BM 3577 / RP62A)).